The chain runs to 21 residues: Misgurin (21 aa).

Residues 1-21 (RQRVEELSKFSKKGAAARRRK) are disordered. Over residues 10 to 21 (FSKKGAAARRRK) the composition is skewed to basic residues.

It localises to the secreted. Its function is as follows. Strong antimicrobial activity against several Gram-positive and Gram-negative bacteria and fungi. The polypeptide is Misgurin (Misgurnus anguillicaudatus (Oriental weatherloach)).